Here is a 181-residue protein sequence, read N- to C-terminus: Transcription termination/antitermination protein NusG (181 aa).

The 32-residue stretch at 130-161 (PGELVRVSDGPFADFNGVVEEVDYEKSRLKVS) folds into the KOW domain.

This sequence belongs to the NusG family. Monomer. Interacts with the transcription termination factor Rho and with RNA polymerase.

Participates in transcription elongation, termination and antitermination. In the absence of Rho, increases the rate of transcription elongation by the RNA polymerase (RNAP), probably by partially suppressing pausing. In the presence of Rho, modulates most Rho-dependent termination events by interacting with the RNAP to render the complex more susceptible to the termination activity of Rho. May be required to overcome a kinetic limitation of Rho to function at certain terminators. Also involved in ribosomal RNA transcriptional antitermination. The sequence is that of Transcription termination/antitermination protein NusG from Yersinia pestis.